A 498-amino-acid polypeptide reads, in one-letter code: E3 ubiquitin-protein ligase TRIM22 (498 aa).

Residues 15 to 60 (CPICLELLTEPLSLDCGHSFCQACITAKIKESVIISRGESSCPVCQ) form an RING-type zinc finger. The B box-type zinc finger occupies 92 to 133 (QKRDVCEHHGKKLQIFCKEDGKVICWVCELSQEHQGHQTFRI). The Zn(2+) site is built by C97, H100, C119, and H125. A coiled-coil region spans residues 132–248 (RINEVVKECQ…RRLRGSSVEM (117 aa)). Residues 257–275 (KRSESWTLKKPKSVSKKLK) carry the Nuclear localization signal motif. The B30.2/SPRY domain occupies 283 to 498 (LSGMLQVLKE…VPMTVCPPSS (216 aa)).

The protein belongs to the TRIM/RBCC family. In terms of assembly, homotrimer. (Microbial infection) Interacts with HIV-1 Gag polyprotein; this interaction seems to reduce gag production or virus budding. As to quaternary structure, (Microbial infection) Interacts with EMCV protease 3C; this interaction leads to viral protease ubiquitination. Post-translationally, auto-ubiquitinated. In terms of tissue distribution, strongly expressed in peripheral blood leukocytes, spleen, thymus, and ovary. Expressed at basal levels in other tissues.

It is found in the cytoplasm. It localises to the nucleus. The protein resides in the nucleus speckle. The protein localises to the cajal body. The catalysed reaction is S-ubiquitinyl-[E2 ubiquitin-conjugating enzyme]-L-cysteine + [acceptor protein]-L-lysine = [E2 ubiquitin-conjugating enzyme]-L-cysteine + N(6)-ubiquitinyl-[acceptor protein]-L-lysine.. It participates in protein modification; protein ubiquitination. In terms of biological role, interferon-induced E3 ubiquitin ligase that plays important roles in innate and adaptive immunity. Restricts the replication of many viruses including HIV-1, encephalomyocarditis virus (EMCV), hepatitis B virus (HBV), hepatitis C virus (HCV) or Zika virus (ZIKV). Mechanistically, negatively regulates HCV replication by promoting ubiquitination and subsequent degradation of viral NS5A. Also acts by promoting the degradation of Zika virus NS1 and NS3 proteins through proteasomal degradation. Acts as a suppressor of basal HIV-1 LTR-driven transcription by preventing Sp1 binding to the HIV-1 promoter. Also plays a role in antiviral immunity by co-regulating together with NT5C2 the RIGI/NF-kappa-B pathway by promoting 'Lys-63'-linked ubiquitination of RIGI, while NT5C2 is responsible for 'Lys-48'-linked ubiquitination of RIGI. Participates in adaptive immunity by suppressing the amount of MHC class II protein in a negative feedback manner in order to limit the extent of MHC class II induction. The sequence is that of E3 ubiquitin-protein ligase TRIM22 (TRIM22) from Homo sapiens (Human).